A 146-amino-acid chain; its full sequence is Large ribosomal subunit protein uL15 (146 aa).

Residues 1-53 (MILSNLKPVPGARHSKKRLGRGPGSGTGKTSGKGHKGQKARSGGGVRPGFEGG) are disordered. Composition is skewed to gly residues over residues 21–31 (RGPGSGTGKTS) and 42–52 (SGGGVRPGFEG).

It belongs to the universal ribosomal protein uL15 family. In terms of assembly, part of the 50S ribosomal subunit.

Functionally, binds to the 23S rRNA. This Acholeplasma laidlawii (strain PG-8A) protein is Large ribosomal subunit protein uL15.